Consider the following 191-residue polypeptide: Akirin-1 (191 aa).

The disordered stretch occupies residues 17-70; it reads LLSPGSPKRRRCAPLPGPTPGLRPPDAEPPPLQMQTPPASLQQPAPPGSERRLP. Ser22 bears the Phosphoserine mark. Residues 23–28 carry the Nuclear localization signal motif; it reads PKRRRC. Over residues 31–48 the composition is skewed to pro residues; sequence LPGPTPGLRPPDAEPPPL. Residues 49-59 show a composition bias toward polar residues; that stretch reads QMQTPPASLQQ. Phosphothreonine is present on Thr71. Positions 188–191 match the SYVS motif motif; sequence SYVS.

It belongs to the akirin family. In terms of tissue distribution, expressed in macrophages and satellite cells.

It is found in the nucleus. Functionally, molecular adapter that acts as a bridge between proteins, and which is involved skeletal muscle development. Functions as a signal transducer for MSTN during skeletal muscle regeneration and myogenesis. May regulate chemotaxis of both macrophages and myoblasts by reorganising actin cytoskeleton, leading to more efficient lamellipodia formation via a PI3 kinase dependent pathway. In contrast to AKIRIN2, not involved in nuclear import of proteasomes. The polypeptide is Akirin-1 (Mus musculus (Mouse)).